We begin with the raw amino-acid sequence, 291 residues long: MDPSLLRERELFKKRALSTPVVEKRSASSESSSSSSKKKKTKVEHGGSSGSKQNSDHSNGSFNLKALSGSSGYKFGVLAKIVNYMKTRHQRGDTHPLTLDEILDETQHLDIGLKQKQWLMTEALVNNPKIEVIDGKYAFKPKYNVRDKKALLRLLDQHDQRGLGGILLEDIEEALPNSQKAVKALGDQILFVNRPDKKKILFFNDKSCQFSVDEEFQKLWRSVTVDSMDEEKIEEYLKRQGISSMQESGPKKVAPIQRRKKPASQKKRRFKTHNEHLAGVLKDYSDITSSK.

Met-1 carries the post-translational modification N-acetylmethionine. The span at 1-13 shows a compositional bias: basic and acidic residues; sequence MDPSLLRERELFK. The segment at 1–63 is disordered; sequence MDPSLLRERE…NSDHSNGSFN (63 aa). The span at 50–62 shows a compositional bias: polar residues; that stretch reads GSKQNSDHSNGSF. A Phosphoserine modification is found at Ser-61. The TFIIE beta DNA-binding region spans 66–146; the sequence is ALSGSSGYKF…YAFKPKYNVR (81 aa). Lys-74 bears the N6-acetyllysine mark. The disordered stretch occupies residues 243–272; that stretch reads SSMQESGPKKVAPIQRRKKPASQKKRRFKT. A compositionally biased stretch (basic residues) spans 257–271; sequence QRRKKPASQKKRRFK.

The protein belongs to the TFIIE beta subunit family. Tetramer of two alpha and two beta chains. Interacts with FACT subunit SUPT16H. Interacts with ATF7IP. Interacts with SND1. Part of TBP-based Pol II pre-initiation complex (PIC), in which Pol II core assembles with general transcription factors and other specific initiation factors including GTF2E1, GTF2E2, GTF2F1, GTF2F2, TCEA1, ERCC2, ERCC3, GTF2H2, GTF2H3, GTF2H4, GTF2H5, GTF2A1, GTF2A2, GTF2B and TBP; this large multi-subunit PIC complex mediates DNA unwinding and targets Pol II core to the transcription start site where the first phosphodiester bond forms.

It is found in the nucleus. In terms of biological role, recruits TFIIH to the initiation complex and stimulates the RNA polymerase II C-terminal domain kinase and DNA-dependent ATPase activities of TFIIH. Both TFIIH and TFIIE are required for promoter clearance by RNA polymerase. This chain is Transcription initiation factor IIE subunit beta (GTF2E2), found in Homo sapiens (Human).